The chain runs to 143 residues: Transcriptional regulator MraZ (143 aa).

2 consecutive SpoVT-AbrB domains span residues 5–47 and 76–119; these read EFRH…PMNE and ASEC…SQEK.

Belongs to the MraZ family. In terms of assembly, forms oligomers.

The protein localises to the cytoplasm. It is found in the nucleoid. This is Transcriptional regulator MraZ from Natranaerobius thermophilus (strain ATCC BAA-1301 / DSM 18059 / JW/NM-WN-LF).